The chain runs to 73 residues: Large ribosomal subunit protein bL31 (73 aa).

This sequence belongs to the bacterial ribosomal protein bL31 family. Type A subfamily. As to quaternary structure, part of the 50S ribosomal subunit.

Its function is as follows. Binds the 23S rRNA. In Paracoccus denitrificans (strain Pd 1222), this protein is Large ribosomal subunit protein bL31.